The chain runs to 319 residues: L-galactose dehydrogenase (319 aa).

Tyr59 (proton donor) is an active-site residue. The 148-residue stretch at 122-269 folds into the SIS domain; that stretch reads HCHDIEFGSL…ANKEISSVLV (148 aa). His124 is a binding site for substrate.

It belongs to the aldo/keto reductase family.

It catalyses the reaction L-galactose + NAD(+) = L-galactono-1,4-lactone + NADH + H(+). Its function is as follows. Catalyzes the oxidation of L-galactose to L-galactono-1,4-lactone in the presence of NAD(+). Uses NAD(+) as a hydrogen acceptor much more efficiently than NADP(+). The protein is L-galactose dehydrogenase (LGALDH) of Arabidopsis thaliana (Mouse-ear cress).